Consider the following 956-residue polypeptide: RNA-silencing factor ers1 (956 aa).

It localises to the cytoplasm. It is found in the cytoskeleton. Its subcellular location is the microtubule organizing center. The protein localises to the spindle pole body. In terms of biological role, involved in RNAi-dependent heterochromatin formation and centromeric silencing. Required for the conversion of centromeric pre-small interfering RNA transcripts into small interfering RNAs, histone H3 'Lys9' methylation, and the recruitment of the RITS complex to centromeric sequences. The protein is RNA-silencing factor ers1 (ers1) of Schizosaccharomyces pombe (strain 972 / ATCC 24843) (Fission yeast).